We begin with the raw amino-acid sequence, 376 residues long: Queuine tRNA-ribosyltransferase (376 aa).

The active-site Proton acceptor is the Asp-92. Residues 92-96 (DSGGF), Asp-146, Gln-190, and Gly-217 each bind substrate. The segment at 248 to 254 (GVGRPED) is RNA binding. Asp-267 functions as the Nucleophile in the catalytic mechanism. The interval 272–276 (TRNAR) is RNA binding; important for wobble base 34 recognition. Zn(2+) contacts are provided by Cys-305, Cys-307, Cys-310, and His-337.

This sequence belongs to the queuine tRNA-ribosyltransferase family. Homodimer. Within each dimer, one monomer is responsible for RNA recognition and catalysis, while the other monomer binds to the replacement base PreQ1. It depends on Zn(2+) as a cofactor.

The enzyme catalyses 7-aminomethyl-7-carbaguanine + guanosine(34) in tRNA = 7-aminomethyl-7-carbaguanosine(34) in tRNA + guanine. It functions in the pathway tRNA modification; tRNA-queuosine biosynthesis. Its function is as follows. Catalyzes the base-exchange of a guanine (G) residue with the queuine precursor 7-aminomethyl-7-deazaguanine (PreQ1) at position 34 (anticodon wobble position) in tRNAs with GU(N) anticodons (tRNA-Asp, -Asn, -His and -Tyr). Catalysis occurs through a double-displacement mechanism. The nucleophile active site attacks the C1' of nucleotide 34 to detach the guanine base from the RNA, forming a covalent enzyme-RNA intermediate. The proton acceptor active site deprotonates the incoming PreQ1, allowing a nucleophilic attack on the C1' of the ribose to form the product. After dissociation, two additional enzymatic reactions on the tRNA convert PreQ1 to queuine (Q), resulting in the hypermodified nucleoside queuosine (7-(((4,5-cis-dihydroxy-2-cyclopenten-1-yl)amino)methyl)-7-deazaguanosine). The protein is Queuine tRNA-ribosyltransferase of Stenotrophomonas maltophilia (strain K279a).